A 429-amino-acid polypeptide reads, in one-letter code: Neuronal pentraxin-2 (429 aa).

Residues 1 to 14 (MLALLTVGVALAVA) form the signal peptide. N-linked (GlcNAc...) asparagine glycans are attached at residues N146 and N187. Residues 221-422 (DAFKVSLPLR…GASKWPVETC (202 aa)) form the Pentraxin (PTX) domain. C251 and C311 are oxidised to a cystine. Residues N275, E353, Q354, D355, and Q365 each contribute to the Ca(2+) site. N391 carries N-linked (GlcNAc...) asparagine glycosylation.

As to quaternary structure, homooligomer or heterooligomer (probably pentamer) with neuronal pentraxin receptor (NPTXR). The cofactor is Ca(2+).

The protein resides in the secreted. Likely to play role in the modification of cellular properties that underlie long-term plasticity. Binds to agar matrix in a calcium-dependent manner. This Mus musculus (Mouse) protein is Neuronal pentraxin-2 (Nptx2).